Reading from the N-terminus, the 79-residue chain is Dolichyl-diphosphooligosaccharide--protein glycosyltransferase subunit TMEM258 (79 aa).

2 helical membrane passes run 17–37 and 59–79; these read VFPH…AWFF and VASL…GIFV.

This sequence belongs to the OST5 family. Component of the oligosaccharyltransferase (OST) complex.

The protein localises to the membrane. It localises to the endoplasmic reticulum. Its subcellular location is the cytoplasm. It participates in protein modification; protein glycosylation. Subunit of the oligosaccharyl transferase (OST) complex that catalyzes the initial transfer of a defined glycan (Glc(3)Man(9)GlcNAc(2) in eukaryotes) from the lipid carrier dolichol-pyrophosphate to an asparagine residue within an Asn-X-Ser/Thr consensus motif in nascent polypeptide chains, the first step in protein N-glycosylation. N-glycosylation occurs cotranslationally and the complex associates with the Sec61 complex at the channel-forming translocon complex that mediates protein translocation across the endoplasmic reticulum (ER). All subunits are required for a maximal enzyme activity. The chain is Dolichyl-diphosphooligosaccharide--protein glycosyltransferase subunit TMEM258 from Danio rerio (Zebrafish).